The chain runs to 206 residues: Thymidylate kinase (206 aa).

Position 11 to 18 (11 to 18 (GIDGAGKT)) interacts with ATP.

The protein belongs to the thymidylate kinase family.

It carries out the reaction dTMP + ATP = dTDP + ADP. Its function is as follows. Phosphorylation of dTMP to form dTDP in both de novo and salvage pathways of dTTP synthesis. The protein is Thymidylate kinase of Paraburkholderia phytofirmans (strain DSM 17436 / LMG 22146 / PsJN) (Burkholderia phytofirmans).